The sequence spans 1732 residues: Transient receptor potential cation channel subfamily M member 3 (1732 aa).

Residues 1-894 lie on the Cytoplasmic side of the membrane; that stretch reads MPGPWGTVYF…RKIYEFYNAP (894 aa). Calmodulin-binding regions lie at residues 41–64, 192–215, 300–323, 601–624, and 793–816; these read WTIR…QKSW, NFEL…MTTG, TGKY…QKIN, RKRF…KLLG, and RKNS…LEFK. A required for the inhibitory action of G-beta/gamma-subunits of heterotrimeric G-proteins region spans residues 617–625; it reads PKALKLLGM. Ser796 contributes to the 1,2-dioctanoyl-sn-glycero-3-phospho-(1D-myo-inositol-4,5-bisphosphate) binding site. The segment at 829–851 is disordered; that stretch reads EIHLQEKEPEEPEKPTKEKDEED. A compositionally biased stretch (basic and acidic residues) spans 831 to 847; sequence HLQEKEPEEPEKPTKEK. The chain crosses the membrane as a helical span at residues 895-918; it reads IVKFWFYTLAYIGYLMLFNYIVLV. Residues 919–925 lie on the Extracellular side of the membrane; sequence KMERWPS. The helical transmembrane segment at 926–948 threads the bilayer; that stretch reads TQEWIVISYIFTLGIEKMREILM. The Cytoplasmic segment spans residues 949 to 964; sequence SEPGKLLQKVKVWLQE. Residues 965–985 form a helical membrane-spanning segment; it reads YWNVTDLIAILLFSVGMILRL. Residues 986–989 are Extracellular-facing; the sequence is QDQP. Residues 990 to 1013 traverse the membrane as a helical segment; it reads FRSDGRVIYCVNIIYWYIRLLDIF. The Cytoplasmic portion of the chain corresponds to 1014–1028; the sequence is GVNKYLGPYVMMIGK. The 1,2-dioctanoyl-sn-glycero-3-phospho-(1D-myo-inositol-4,5-bisphosphate) site is built by Lys1017 and Tyr1018. Residues 1029-1056 traverse the membrane as a helical segment; the sequence is MMIDMMYFVIIMLVVLMSFGVARQAILF. Residues 1057 to 1073 lie on the Extracellular side of the membrane; that stretch reads PNEEPSWKLAKNIFYMP. Positions 1074–1101 form an intramembrane region, pore-forming; the sequence is YWMIYGEVFADQIDPPCGQNETREDGKT. Residues 1102-1111 lie on the Extracellular side of the membrane; it reads IQLPPCKTGA. A helical membrane pass occupies residues 1112–1137; that stretch reads WIVPAIMACYLLVANILLVNLLIAVF. Topologically, residues 1138 to 1732 are cytoplasmic; the sequence is NNTFFEVKSI…AFHSFESKHN (595 aa). The segment at 1610-1732 is disordered; that stretch reads EREAELSHPS…AFHSFESKHN (123 aa). 2 stretches are compositionally biased toward polar residues: residues 1635–1653 and 1690–1701; these read PISS…NNIT and NTASLRNPFQRS.

Belongs to the transient receptor (TC 1.A.4) family. LTrpC subfamily. TRPM3 sub-subfamily. In terms of assembly, homotetramer. Interacts with TRPM1; the interaction results in the formation of a heteromultimeric cation channel complex that are functionally different from the homomeric channels.

It is found in the cell membrane. The enzyme catalyses Ca(2+)(in) = Ca(2+)(out). It catalyses the reaction Mn(2+)(in) = Mn(2+)(out). The catalysed reaction is Zn(2+)(in) = Zn(2+)(out). It carries out the reaction Mg(2+)(in) = Mg(2+)(out). The enzyme catalyses Na(+)(in) = Na(+)(out). Its activity is regulated as follows. Activated by the neurosteroid pregnelonone sulfate (PregS). PregS activates the channel by shifting its current-voltage activation curve toward more negative membrane potentials and also potentiates temperature-induced activation. Activated by heat. Intracellular Ca(2+) inhibits TRPM3 probably via interaction with Ca(2+)/calmodulin. Intracellular Mg(2+) inhibits TRPM3 activity. Both intracellular and extracellular protons block TRPM3 through propable binding sites in the pore region. Positively regulated by phosphoinositide phosphoinositol 4,5-biphosphate (PI(4,5)P2). Strongly inhibited by activation of G(i)-coupled receptors via direct binding with G-beta/gamma-subunits of heterotrimeric G-proteins. Insensitive to pregnenolone sulfate (PregS) or heat. With respect to regulation, not inhibited by G-beta/gamma-subunits of heterotrimeric G-proteins. Its function is as follows. Constitutively active, non-selective divalent cation-conducting channel that is permeable to Ca(2+), Mn(2+), and Mg(2+), with a high permeability for Ca(2+). However, can be enhanced by increasing temperature and by ligands, including the endogenous neurosteroid pregnenolone sulfate and sphingosine-1 and suppressed by intracellular Mg(2+). Implicated in a variety of cellular processes, including insulin/peptide secretion, vascular constriction and dilation, noxious heat sensing, inflammatory and spontaneous pain sensitivity. In neurons of the dorsal root ganglia, functions as thermosensitive channel for the detection of noxious heat and spontaneous pain. Suggested to function as an ionotropic steroid receptor in beta-cell, indeed pregnenolone sulfate leads to Ca(2+) influx and enhanced insulin secretion. Mediates Zn(2+) uptake into the lumen of pancreatic beta cell secretory granules, thereby regulating insulin secretion. Forms heteromultimeric ion channels with TRPM1 which are permeable for Ca(2+) and Zn(2+) ions. Exists as multiple splice variants which differ significantly in their biophysical properties. Functionally, displays strongly reduced permeability for divalent cations and high selectivity toward monovalent cations. In terms of biological role, no channel activity. This Mus musculus (Mouse) protein is Transient receptor potential cation channel subfamily M member 3.